A 447-amino-acid chain; its full sequence is MANDIESKVIKAKKASIELASVSSEVKNRALEAMAEALDKERKIILEANLKDLEYAAQLKKAGKLTQALVDRLKVTDSKVDGMIAGIRDVIKLKDPVGETLSTLELDDDLILYQVSCPIGLIGVIFESRPDVVPQVMSLCLKSGNATIFKGGSEARESNRTIFDILVRAIESTGGMPEGAFQLMETREEIMSLLSLDAYVDLLIPRGSNEFVKFIQDNTKIPVLGHTSGICHIYVDEFADPDTAWQVCFDAKVQYPAVCNAIETLLVNRNIAEVFLPKMAEMYLKAGVELRCDEGSYSLLSEKGLSPLSRATDEDWSLEYNDLILSIKLVDTIKEAVDHINTFGSHHTDGIITENASRRKEFIGLVDSSSVMVNASTRFADGYRYGKGAEVGISTNKIHSRGPVGMEGLLIYKYILMGKGQVVADYAGKNAKPYTHRKLDLKFEDVN.

Belongs to the gamma-glutamyl phosphate reductase family.

It is found in the cytoplasm. The catalysed reaction is L-glutamate 5-semialdehyde + phosphate + NADP(+) = L-glutamyl 5-phosphate + NADPH + H(+). Its pathway is amino-acid biosynthesis; L-proline biosynthesis; L-glutamate 5-semialdehyde from L-glutamate: step 2/2. In terms of biological role, catalyzes the NADPH-dependent reduction of L-glutamate 5-phosphate into L-glutamate 5-semialdehyde and phosphate. The product spontaneously undergoes cyclization to form 1-pyrroline-5-carboxylate. The chain is Gamma-glutamyl phosphate reductase from Methanosarcina mazei (strain ATCC BAA-159 / DSM 3647 / Goe1 / Go1 / JCM 11833 / OCM 88) (Methanosarcina frisia).